Reading from the N-terminus, the 554-residue chain is Formate--tetrahydrofolate ligase (554 aa).

Residue threonine 65 to threonine 72 participates in ATP binding.

It belongs to the formate--tetrahydrofolate ligase family.

The catalysed reaction is (6S)-5,6,7,8-tetrahydrofolate + formate + ATP = (6R)-10-formyltetrahydrofolate + ADP + phosphate. It functions in the pathway one-carbon metabolism; tetrahydrofolate interconversion. In Aliivibrio salmonicida (strain LFI1238) (Vibrio salmonicida (strain LFI1238)), this protein is Formate--tetrahydrofolate ligase.